The sequence spans 412 residues: MAATLLARACGLVRGAPWPWGWRRLHTVYQSVELPETHQMLRQTCRDFAEKELFPIAAQVDKEHRFPAAQVKKMGELGLMAMNVPEELSGAGLDYLAYSIAMEEISRGCASTGVIMSVNNSLYLGPILKFGTKEQKQQWVAPFTSGDKIGCFALSEPGNGSDAGAAATTARADGDSWVLSGTKAWITNAWEASAVVVFASTDRSLHNKGISAFLVPMPTPGLTLGKKEDKLGIRASSTANLIFEDRRIPKDSLLGEPGLGFKIAMQTLDTGRIGIASQALGIAQAALDCAVTYAENRSAFGAPLTKLQAIQFKLADMALALESARLLTWRAAMLKDNKKPFTKEAAMAKLAASEAATAITHQAMQILGGMGYVKEMPAERHYRDARITEIYEGTSEIQRLVVAGHLLKSYRS.

The transit peptide at 1–24 directs the protein to the mitochondrion; that stretch reads MAATLLARACGLVRGAPWPWGWRR. A Phosphothreonine modification is found at Thr-27. The residue at position 51 (Lys-51) is an N6-acetyllysine; alternate. Lys-51 carries the post-translational modification N6-succinyllysine; alternate. Lys-72 bears the N6-acetyllysine mark. Lys-129 carries the post-translational modification N6-acetyllysine; alternate. Position 129 is an N6-succinyllysine; alternate (Lys-129). FAD-binding positions include 152–161 and 185–187; these read FALSEPGNGS and WIT. Substrate is bound at residue Ser-161. N6-acetyllysine is present on Lys-208. An N6-acetyllysine; alternate modification is found at Lys-262. Lys-262 bears the N6-succinyllysine; alternate mark. 269-272 is a binding site for substrate; sequence DTGR. FAD is bound at residue Arg-297. Lys-306 carries the N6-acetyllysine; alternate modification. Lys-306 carries the post-translational modification N6-succinyllysine; alternate. FAD-binding positions include Gln-308 and 365 to 369; that span reads QILGG. Residue Glu-392 is the Proton acceptor of the active site. Gly-393 contacts substrate. 394–396 contacts FAD; that stretch reads TSE.

It belongs to the acyl-CoA dehydrogenase family. As to quaternary structure, homotetramer. FAD is required as a cofactor.

It is found in the mitochondrion matrix. It carries out the reaction a short-chain 2,3-saturated fatty acyl-CoA + oxidized [electron-transfer flavoprotein] + H(+) = a short-chain (2E)-enoyl-CoA + reduced [electron-transfer flavoprotein]. It catalyses the reaction butanoyl-CoA + oxidized [electron-transfer flavoprotein] + H(+) = (2E)-butenoyl-CoA + reduced [electron-transfer flavoprotein]. The catalysed reaction is pentanoyl-CoA + oxidized [electron-transfer flavoprotein] + H(+) = (2E)-pentenoyl-CoA + reduced [electron-transfer flavoprotein]. The enzyme catalyses hexanoyl-CoA + oxidized [electron-transfer flavoprotein] + H(+) = (2E)-hexenoyl-CoA + reduced [electron-transfer flavoprotein]. It participates in lipid metabolism; mitochondrial fatty acid beta-oxidation. In terms of biological role, short-chain specific acyl-CoA dehydrogenase is one of the acyl-CoA dehydrogenases that catalyze the first step of mitochondrial fatty acid beta-oxidation, an aerobic process breaking down fatty acids into acetyl-CoA and allowing the production of energy from fats. The first step of fatty acid beta-oxidation consists in the removal of one hydrogen from C-2 and C-3 of the straight-chain fatty acyl-CoA thioester, resulting in the formation of trans-2-enoyl-CoA. Among the different mitochondrial acyl-CoA dehydrogenases, short-chain specific acyl-CoA dehydrogenase acts specifically on acyl-CoAs with saturated 4 to 6 carbons long primary chains. In Bos taurus (Bovine), this protein is Short-chain specific acyl-CoA dehydrogenase, mitochondrial (ACADS).